The chain runs to 194 residues: MLSSTLRVAVVCVSNVNRSMEAHSILRRKGLSVRSFGTESHVRLPGPRPNRPVVYDFATTYKEMYNDLLRKDRERYTRNGILHILGRNERIKPGPERFQECTDSFDVIFTCEESVYDTVVEDLCSREQQTFQPVHVINMEIQDTLEDATLGAFLICEICQCLQQSDDMEDNLEELLLQMEEKAGKSFLHTVCFY.

Belongs to the SSU72 phosphatase family.

Its subcellular location is the nucleus. It catalyses the reaction O-phospho-L-seryl-[protein] + H2O = L-seryl-[protein] + phosphate. The catalysed reaction is O-phospho-L-threonyl-[protein] + H2O = L-threonyl-[protein] + phosphate. Protein phosphatase that catalyzes the dephosphorylation of the C-terminal domain of RNA polymerase II. Plays a role in RNA processing and termination. In Homo sapiens (Human), this protein is RNA polymerase II subunit A C-terminal domain phosphatase SSU72 like protein 5.